A 37-amino-acid polypeptide reads, in one-letter code: ATP synthase subunit O, mitochondrial (37 aa).

The protein belongs to the ATPase delta chain family. F-type ATPases have 2 components, CF(1) - the catalytic core - and CF(0) - the membrane proton channel. CF(1) has five subunits: alpha(3), beta(3), gamma(1), delta(1), epsilon(1). CF(0) has three main subunits: a, b and c.

Its subcellular location is the mitochondrion. The protein resides in the mitochondrion inner membrane. In terms of biological role, mitochondrial membrane ATP synthase (F(1)F(0) ATP synthase or Complex V) produces ATP from ADP in the presence of a proton gradient across the membrane which is generated by electron transport complexes of the respiratory chain. F-type ATPases consist of two structural domains, F(1) - containing the extramembraneous catalytic core and F(0) - containing the membrane proton channel, linked together by a central stalk and a peripheral stalk. During catalysis, ATP synthesis in the catalytic domain of F(1) is coupled via a rotary mechanism of the central stalk subunits to proton translocation. Part of the complex F(0) domain and the peripheric stalk, which acts as a stator to hold the catalytic alpha(3)beta(3) subcomplex and subunit a/ATP6 static relative to the rotary elements. This chain is ATP synthase subunit O, mitochondrial, found in Solanum tuberosum (Potato).